The following is a 152-amino-acid chain: MKQRTFTMLKPDAVKRRLTGEILTRFEKRGLKVIAAKTLMISEDLAKTHYGEHSDKPFFNDLISYITSGPVFAMVLEGDDVISLVRKMVGATNPKEADIGTIRGDYGIDTGRNIVHASDSEESAQREINLFFDETEFCDYELPDEDIIYEEP.

6 residues coordinate ATP: K10, F58, R86, T92, R103, and N113. The active-site Pros-phosphohistidine intermediate is the H116.

It belongs to the NDK family. The cofactor is Mg(2+).

The protein resides in the cytoplasm. The enzyme catalyses a 2'-deoxyribonucleoside 5'-diphosphate + ATP = a 2'-deoxyribonucleoside 5'-triphosphate + ADP. It carries out the reaction a ribonucleoside 5'-diphosphate + ATP = a ribonucleoside 5'-triphosphate + ADP. In terms of biological role, major role in the synthesis of nucleoside triphosphates other than ATP. The ATP gamma phosphate is transferred to the NDP beta phosphate via a ping-pong mechanism, using a phosphorylated active-site intermediate. This Methanosphaera stadtmanae (strain ATCC 43021 / DSM 3091 / JCM 11832 / MCB-3) protein is Nucleoside diphosphate kinase.